The sequence spans 370 residues: Histidinol-phosphate aminotransferase 1 (370 aa).

Residue Lys-222 is modified to N6-(pyridoxal phosphate)lysine.

It belongs to the class-II pyridoxal-phosphate-dependent aminotransferase family. Histidinol-phosphate aminotransferase subfamily. As to quaternary structure, homodimer. The cofactor is pyridoxal 5'-phosphate.

It carries out the reaction L-histidinol phosphate + 2-oxoglutarate = 3-(imidazol-4-yl)-2-oxopropyl phosphate + L-glutamate. Its pathway is amino-acid biosynthesis; L-histidine biosynthesis; L-histidine from 5-phospho-alpha-D-ribose 1-diphosphate: step 7/9. This is Histidinol-phosphate aminotransferase 1 from Bacillus thuringiensis subsp. konkukian (strain 97-27).